Here is a 354-residue protein sequence, read N- to C-terminus: MYSKFWPKGGLPGILHHYTETLVTFEYTTTTTRKPHSLLFVGGLGDGLATTSYLADLAHALQPTEWSLFTLTLTSSYQSWGLGHLDRDTNEIAQCLKYIKEYKTEKFGGSASSGKIVLMGHSTGSQCVLHYLSRPNPHTHTPAFDPYLEHVERMPLDGAIMQAPVSDREAIQWVLAEGLGDRTPAEIRPVFEKLTSMAREAARDADAGTDVLLPLAMTSLVYPAHTPLSARRFLSLTSPESPESPSEDDLFSSDLSDEQLGKTFGMIREQGLLRGKLMVLFSGADQSVPAWVDKDTLLSRWRNATDHNGEAAIWDENSGIIPNASHALSNDDQAEPRNFLVNKVLGYLSALVKA.

The protein belongs to the sidJ hydrolase family. In terms of assembly, homodimer.

It carries out the reaction fusarinine C + 3 H2O = 3 fusarinine + Fe(3+). Displays specific fusarinine C (FsC) esterase activity but does not hydrolyze triacetylfusarinine C (TAFC), which has the same core structure as fusarinine C. Both extra- and intracellular siderophores have been shown to be crucial for the virulence. Subsequent to chelation of iron and uptake, FsC and TAFC are hydrolyzed and the iron is transferred to the metabolism or to the intracellular siderophore ferricrocin (FC) for transport and storage of iron. This is Fusarinine C esterase sidJ from Aspergillus fumigatus (strain ATCC MYA-4609 / CBS 101355 / FGSC A1100 / Af293) (Neosartorya fumigata).